The chain runs to 256 residues: Triosephosphate isomerase (256 aa).

Position 12-14 (12-14 (NWK)) interacts with substrate. The active-site Electrophile is the His99. Catalysis depends on Glu169, which acts as the Proton acceptor. Residues Gly175, Ser214, and 235-236 (GG) contribute to the substrate site.

It belongs to the triosephosphate isomerase family. As to quaternary structure, homodimer.

It is found in the cytoplasm. The catalysed reaction is D-glyceraldehyde 3-phosphate = dihydroxyacetone phosphate. It participates in carbohydrate biosynthesis; gluconeogenesis. Its pathway is carbohydrate degradation; glycolysis; D-glyceraldehyde 3-phosphate from glycerone phosphate: step 1/1. Involved in the gluconeogenesis. Catalyzes stereospecifically the conversion of dihydroxyacetone phosphate (DHAP) to D-glyceraldehyde-3-phosphate (G3P). The polypeptide is Triosephosphate isomerase (Rhizobium etli (strain ATCC 51251 / DSM 11541 / JCM 21823 / NBRC 15573 / CFN 42)).